A 105-amino-acid chain; its full sequence is MELTRVILHPYTTEKTYSIRNKSEHETLTFIVDKNANKYQIREAFIAIFGLKPLKIRTTNRGPAKIRTSTARPGYTKAKKIAYIVMPIGVKVAVSKEEVEAANAK.

This sequence belongs to the universal ribosomal protein uL23 family. Part of the 50S ribosomal subunit. Contacts protein L29, and trigger factor when it is bound to the ribosome.

Its function is as follows. One of the early assembly proteins it binds 23S rRNA. One of the proteins that surrounds the polypeptide exit tunnel on the outside of the ribosome. Forms the main docking site for trigger factor binding to the ribosome. The chain is Large ribosomal subunit protein uL23 from Ureaplasma urealyticum serovar 10 (strain ATCC 33699 / Western).